Here is a 226-residue protein sequence, read N- to C-terminus: ATP synthase F(0) complex subunit a (226 aa).

A run of 6 helical transmembrane segments spans residues 14 to 34 (ILGI…FSAP), 68 to 88 (WTLM…LGLL), 97 to 117 (QLSM…LMGF), 138 to 158 (IPML…ALAV), 164 to 184 (ITAG…LSSI), and 193 to 213 (FTIL…QAYV).

Belongs to the ATPase A chain family. In terms of assembly, component of the ATP synthase complex composed at least of ATP5F1A/subunit alpha, ATP5F1B/subunit beta, ATP5MC1/subunit c (homooctomer), MT-ATP6/subunit a, MT-ATP8/subunit 8, ATP5ME/subunit e, ATP5MF/subunit f, ATP5MG/subunit g, ATP5MK/subunit k, ATP5MJ/subunit j, ATP5F1C/subunit gamma, ATP5F1D/subunit delta, ATP5F1E/subunit epsilon, ATP5PF/subunit F6, ATP5PB/subunit b, ATP5PD/subunit d, ATP5PO/subunit OSCP. ATP synthase complex consists of a soluble F(1) head domain (subunits alpha(3) and beta(3)) - the catalytic core - and a membrane F(0) domain - the membrane proton channel (subunits c, a, 8, e, f, g, k and j). These two domains are linked by a central stalk (subunits gamma, delta, and epsilon) rotating inside the F1 region and a stationary peripheral stalk (subunits F6, b, d, and OSCP). Interacts with DNAJC30; interaction is direct.

The protein resides in the mitochondrion inner membrane. The catalysed reaction is H(+)(in) = H(+)(out). Subunit a, of the mitochondrial membrane ATP synthase complex (F(1)F(0) ATP synthase or Complex V) that produces ATP from ADP in the presence of a proton gradient across the membrane which is generated by electron transport complexes of the respiratory chain. ATP synthase complex consist of a soluble F(1) head domain - the catalytic core - and a membrane F(1) domain - the membrane proton channel. These two domains are linked by a central stalk rotating inside the F(1) region and a stationary peripheral stalk. During catalysis, ATP synthesis in the catalytic domain of F(1) is coupled via a rotary mechanism of the central stalk subunits to proton translocation. With the subunit c (ATP5MC1), forms the proton-conducting channel in the F(0) domain, that contains two crucial half-channels (inlet and outlet) that facilitate proton movement from the mitochondrial intermembrane space (IMS) into the matrix. Protons are taken up via the inlet half-channel and released through the outlet half-channel, following a Grotthuss mechanism. The sequence is that of ATP synthase F(0) complex subunit a from Tachyglossus aculeatus aculeatus (Southeast Australian short-beaked echidna).